A 98-amino-acid polypeptide reads, in one-letter code: Aspartyl/glutamyl-tRNA(Asn/Gln) amidotransferase subunit C (98 aa).

It belongs to the GatC family. As to quaternary structure, heterotrimer of A, B and C subunits.

The catalysed reaction is L-glutamyl-tRNA(Gln) + L-glutamine + ATP + H2O = L-glutaminyl-tRNA(Gln) + L-glutamate + ADP + phosphate + H(+). The enzyme catalyses L-aspartyl-tRNA(Asn) + L-glutamine + ATP + H2O = L-asparaginyl-tRNA(Asn) + L-glutamate + ADP + phosphate + 2 H(+). In terms of biological role, allows the formation of correctly charged Asn-tRNA(Asn) or Gln-tRNA(Gln) through the transamidation of misacylated Asp-tRNA(Asn) or Glu-tRNA(Gln) in organisms which lack either or both of asparaginyl-tRNA or glutaminyl-tRNA synthetases. The reaction takes place in the presence of glutamine and ATP through an activated phospho-Asp-tRNA(Asn) or phospho-Glu-tRNA(Gln). The polypeptide is Aspartyl/glutamyl-tRNA(Asn/Gln) amidotransferase subunit C (Gloeothece citriformis (strain PCC 7424) (Cyanothece sp. (strain PCC 7424))).